The following is a 414-amino-acid chain: DNA primase large subunit PriL (414 aa).

Residues Cys-251, Cys-352, Cys-370, and Cys-376 each contribute to the [4Fe-4S] cluster site.

Belongs to the eukaryotic-type primase large subunit family. As to quaternary structure, heterodimer of a small subunit (PriS) and a large subunit (PriL). The cofactor is [4Fe-4S] cluster.

Its function is as follows. Regulatory subunit of DNA primase, an RNA polymerase that catalyzes the synthesis of short RNA molecules used as primers for DNA polymerase during DNA replication. Stabilizes and modulates the activity of the small subunit, increasing the rate of DNA synthesis, and conferring RNA synthesis capability. The DNA polymerase activity may enable DNA primase to also catalyze primer extension after primer synthesis. May also play a role in DNA repair. The chain is DNA primase large subunit PriL from Methanocaldococcus jannaschii (strain ATCC 43067 / DSM 2661 / JAL-1 / JCM 10045 / NBRC 100440) (Methanococcus jannaschii).